The sequence spans 591 residues: Paxillin (591 aa).

Met1 bears the N-acetylmethionine mark. Asp2 bears the N-acetylserine mark. Positions 3 to 15 (DLDALLADLESTT) match the LD motif 1 motif. Residues 17-138 (HISKRPVFLS…PSPTVMSTSL (122 aa)) are disordered. Residue Tyr31 is modified to Phosphotyrosine; by PTK6. Positions 45-54 (VPPPVPPPPS) are enriched in pro residues. Residues 69–106 (WQPSSSRFIHQQPQSSSPVYGSSAKTSSVSNPQDSVGS) show a composition bias toward polar residues. 2 positions are modified to phosphoserine: Ser83 and Ser85. Residue Tyr88 is modified to Phosphotyrosine. Ser106 carries the phosphoserine modification. Tyr118 bears the Phosphotyrosine; by PTK6 mark. 3 positions are modified to phosphoserine: Ser119, Ser126, and Ser130. A compositionally biased stretch (polar residues) spans 121–137 (PNKQKSAEPSPTVMSTS). A Phosphothreonine modification is found at Thr132. Phosphoserine occurs at positions 137, 140, and 143. The LD motif 2 motif lies at 144-156 (ELDRLLLELNAVQ). Positions 159–260 (PPGFPADEAN…TQQQTRISAS (102 aa)) are disordered. Position 181 is a phosphotyrosine (Tyr181). The short motif at 216 to 228 (SVESLLDELESSV) is the LD motif 3 element. Ser230 carries the phosphoserine modification. Positions 236–260 (TVNQGEMSSPQRVTSTQQQTRISAS) are enriched in polar residues. Ser244 bears the Phosphoserine; by CDK5 mark. Ser250 carries the post-translational modification Phosphoserine; by SLK. Ser258, Ser261, Ser272, Ser303, Ser322, Ser332, and Ser340 each carry phosphoserine. The required for binding to PARVA and ILK stretch occupies residues 262 to 315 (ATRELDELMASLSDFKIQGLEQRADGERCWAAGWPRDGGRSSPGGQDEGGFMAQ). Residues 265-276 (ELDELMASLSDF) carry the LD motif 4 motif. Positions 291–335 (WAAGWPRDGGRSSPGGQDEGGFMAQGKTGSSSPPGGPPKPGSQLD) are disordered. The LD motif 5 motif lies at 333 to 345 (QLDSMLGSLQSDL). LIM zinc-binding domains lie at 356 to 415 (GVCG…LFSP), 416 to 473 (RCYY…DMFA), 474 to 533 (PKCG…RRGS), and 534 to 591 (LCSG…KLFC). Ser533 carries the phosphoserine modification.

It belongs to the paxillin family. As to quaternary structure, interacts in vitro with VCL/vinculin as well as to the SH3 domain of SRC and, when tyrosine phosphorylated, to the SH2 domain of CRK. Interacts with GIT1. Interacts with NUDT16L1/SDOS. Interacts with PTK2/FAK1. Interacts with PTK2B/PYK2. Interacts with ASAP2. Interacts with unphosphorylated ITGA4. Interacts with RNF5. Interacts with PDCD10. Interacts with NEK3, the interaction is prolactin-dependent. Interacts with PTK6. Interacts with TGFB1I1. Interacts with SORBS1. Interacts with PARVB. Interacts (via LD motif 4) with PARVA/PARVIN. Interacts (via LD motif 4) with ILK. Interacts (via cytoplasmic domain) with CEACAM1; the interaction is phosphotyrosyl-dependent. Interacts with LIMA1; this complex stabilizes actin dynamics. Interacts with CD36 (via C-terminus). Interacts with TRIM15. Interacts with PAK4; PAK4 acts as a scaffold to suppport PAXI phosphorylation at Ser-272. In terms of assembly, interacts strongly with PTK2/FAK1 and weakly with VCL/vinculin. Interacts strongly with VCL/vinculin but only weakly with PTK2/FAK1. In terms of processing, phosphorylated by MAPK1/ERK2. Phosphorylated on tyrosine residues during integrin-mediated cell adhesion, embryonic development, fibroblast transformation and following stimulation of cells by mitogens. Phosphorylation at Ser-244 by CDK5 reduces its interaction with PTK2/FAK1 in matrix-cell focal adhesions (MCFA) during oligodendrocytes (OLs) differentiation. Phosphorylation at Tyr-31 and Tyr-118 by PTK6 promote the activation of RAC1 via CRK/CrKII, thereby promoting migration and invasion. Phosphorylation at Ser-250 by SLK is required for PXN redistribution and cell motility. Phosphorylation at Ser-272 promotes focal adhesion disassembly during cell migration.

It localises to the cytoplasm. It is found in the cytoskeleton. The protein localises to the cell junction. The protein resides in the focal adhesion. Its subcellular location is the cell cortex. Functionally, cytoskeletal protein involved in actin-membrane attachment at sites of cell adhesion to the extracellular matrix (focal adhesion). Recruits other proteins such as TRIM15 to focal adhesion. The sequence is that of Paxillin from Homo sapiens (Human).